The sequence spans 425 residues: Histidine--tRNA ligase (425 aa).

It belongs to the class-II aminoacyl-tRNA synthetase family. In terms of assembly, homodimer.

It localises to the cytoplasm. The catalysed reaction is tRNA(His) + L-histidine + ATP = L-histidyl-tRNA(His) + AMP + diphosphate + H(+). The sequence is that of Histidine--tRNA ligase from Histophilus somni (strain 129Pt) (Haemophilus somnus).